The following is a 530-amino-acid chain: Glucose-6-phosphate isomerase (530 aa).

The active-site Proton donor is the glutamate 356. Residues histidine 387 and lysine 502 contribute to the active site.

This sequence belongs to the GPI family.

It localises to the cytoplasm. It carries out the reaction alpha-D-glucose 6-phosphate = beta-D-fructose 6-phosphate. The protein operates within carbohydrate biosynthesis; gluconeogenesis. Its pathway is carbohydrate degradation; glycolysis; D-glyceraldehyde 3-phosphate and glycerone phosphate from D-glucose: step 2/4. In terms of biological role, catalyzes the reversible isomerization of glucose-6-phosphate to fructose-6-phosphate. This is Glucose-6-phosphate isomerase from Borreliella afzelii (strain PKo) (Borrelia afzelii).